We begin with the raw amino-acid sequence, 427 residues long: MTETNFDFLAQGDPAIAAIIGRELQRQQEHLELIASENFASPAVMAAQGSVLTNKYAEGLPSKRYYGGCEFVDQAEELAIERAKELFGAAHANVQPHSGAQANFAVFLTLLQPGDTFLGMDLSHGGHLTHGSPVNVSGKWFNAGHYGVNRETERLDYDAIRELALQHRPKLIICGYSAYPRTIDFAKFREIADEVGAYLLADMAHIAGLVAAGLHPSPIPHCDVVTTTTHKTLRGPRGGLILTRDAELGKKLDKSVFPGTQGGPLEHVIAAKAVAFGEALRPEFKTYSAQVIANAQALARQLQARGLKIVSDGTDNHLLLVDLRSIGMTGKVADLLVSDVNITANKNTVPFDPESPFVTSGIRLGTAAMTTRGFKEAEFAIVADIIADRLLNPEDSSMEDSCRRRVLELCQRFPLYPHLSPATPVAV.

(6S)-5,6,7,8-tetrahydrofolate-binding positions include Leu-122 and 126 to 128 (GHL). The residue at position 231 (Lys-231) is an N6-(pyridoxal phosphate)lysine. 355–357 (SPF) lines the (6S)-5,6,7,8-tetrahydrofolate pocket.

It belongs to the SHMT family. In terms of assembly, homodimer. Requires pyridoxal 5'-phosphate as cofactor.

Its subcellular location is the cytoplasm. The catalysed reaction is (6R)-5,10-methylene-5,6,7,8-tetrahydrofolate + glycine + H2O = (6S)-5,6,7,8-tetrahydrofolate + L-serine. Its pathway is one-carbon metabolism; tetrahydrofolate interconversion. It participates in amino-acid biosynthesis; glycine biosynthesis; glycine from L-serine: step 1/1. Catalyzes the reversible interconversion of serine and glycine with tetrahydrofolate (THF) serving as the one-carbon carrier. This reaction serves as the major source of one-carbon groups required for the biosynthesis of purines, thymidylate, methionine, and other important biomolecules. Also exhibits THF-independent aldolase activity toward beta-hydroxyamino acids, producing glycine and aldehydes, via a retro-aldol mechanism. The protein is Serine hydroxymethyltransferase of Synechococcus sp. (strain ATCC 27144 / PCC 6301 / SAUG 1402/1) (Anacystis nidulans).